An 87-amino-acid chain; its full sequence is Putative regulatory protein BCQ_3657 (87 aa).

This sequence belongs to the RemA family.

This chain is Putative regulatory protein BCQ_3657, found in Bacillus cereus (strain Q1).